The sequence spans 516 residues: GTPase Obg (516 aa).

The region spanning 4–161 (PTFVDRVTLH…LEIVLELKVV (158 aa)) is the Obg domain. Residues 162-332 (ADIGLVGFPS…LTFAMAGIVE (171 aa)) form the OBG-type G domain. Residues 168–175 (GFPSAGKS), 193–197 (FTTLV), 214–217 (DVPG), 284–287 (NKVD), and 313–315 (SAA) contribute to the GTP site. S175 and T195 together coordinate Mg(2+). The 82-residue stretch at 351–432 (PSVDGSDAFT…ENAVVFDFKP (82 aa)) folds into the OCT domain. Positions 466–491 (AMADRAEGETRADVARRLDRPAREDG) are enriched in basic and acidic residues. The tract at residues 466–516 (AMADRAEGETRADVARRLDRPAREDGGAYGPQSYEIGGRDDPDWAEEDLGE) is disordered.

Belongs to the TRAFAC class OBG-HflX-like GTPase superfamily. OBG GTPase family. In terms of assembly, monomer. Requires Mg(2+) as cofactor.

The protein localises to the cytoplasm. In terms of biological role, an essential GTPase which binds GTP, GDP and possibly (p)ppGpp with moderate affinity, with high nucleotide exchange rates and a fairly low GTP hydrolysis rate. Plays a role in control of the cell cycle, stress response, ribosome biogenesis and in those bacteria that undergo differentiation, in morphogenesis control. The sequence is that of GTPase Obg from Nocardioides sp. (strain ATCC BAA-499 / JS614).